Here is a 418-residue protein sequence, read N- to C-terminus: ATP-dependent RNA helicase RhlB (418 aa).

A Q motif motif is present at residues 9–37; it reads TKFADLPLEKSLISGLTSQGYEYCTPIQA. The Helicase ATP-binding domain maps to 40 to 219; it reads LPITLTGKDI…FEHMNDPESI (180 aa). 53–60 lines the ATP pocket; that stretch reads AQTGTGKT. The short motif at 165 to 168 is the DEAD box element; it reads DEAD. One can recognise a Helicase C-terminal domain in the interval 243–390; sequence KILLLLSLIE…CSEYDKNAML (148 aa).

The protein belongs to the DEAD box helicase family. RhlB subfamily. Component of the RNA degradosome, which is a multiprotein complex involved in RNA processing and mRNA degradation.

The protein localises to the cytoplasm. The catalysed reaction is ATP + H2O = ADP + phosphate + H(+). Functionally, DEAD-box RNA helicase involved in RNA degradation. Has RNA-dependent ATPase activity and unwinds double-stranded RNA. In Psychromonas ingrahamii (strain DSM 17664 / CCUG 51855 / 37), this protein is ATP-dependent RNA helicase RhlB.